The following is a 460-amino-acid chain: tRNA modification GTPase MnmE (460 aa).

(6S)-5-formyl-5,6,7,8-tetrahydrofolate-binding residues include Arg-29, Glu-91, and Arg-131. The TrmE-type G domain maps to 226–383 (GLRVALVGRP…LVQAVLERCG (158 aa)). Asn-236 contributes to the K(+) binding site. GTP-binding positions include 236 to 241 (NVGKSS), 255 to 261 (TDLPGTT), and 280 to 283 (DTAG). Residue Ser-240 coordinates Mg(2+). K(+) contacts are provided by Thr-255, Leu-257, and Thr-260. Thr-261 lines the Mg(2+) pocket. Residue Lys-460 participates in (6S)-5-formyl-5,6,7,8-tetrahydrofolate binding.

It belongs to the TRAFAC class TrmE-Era-EngA-EngB-Septin-like GTPase superfamily. TrmE GTPase family. As to quaternary structure, homodimer. Heterotetramer of two MnmE and two MnmG subunits. The cofactor is K(+).

Its subcellular location is the cytoplasm. Its function is as follows. Exhibits a very high intrinsic GTPase hydrolysis rate. Involved in the addition of a carboxymethylaminomethyl (cmnm) group at the wobble position (U34) of certain tRNAs, forming tRNA-cmnm(5)s(2)U34. The polypeptide is tRNA modification GTPase MnmE (Synechococcus sp. (strain WH7803)).